The primary structure comprises 406 residues: HEAT repeat-containing taxis protein OE_2401F (406 aa).

HEAT repeat units lie at residues 7–41 (LERS…NLDE), 42–78 (PEPE…VDAL), 90–127 (GATW…EDTA), 153–184 (IEQP…LGRL), 185–215 (TTEQ…LGRF), 216–252 (ETAE…NVPP), and 370–406 (VGGD…GGKT).

Interacts with chemotaxis (Che) proteins.

In terms of biological role, involved in taxis signal transduction. Essential for the ability to control the direction of flagellar rotation. May have a role between CheY and the flagellum. The chain is HEAT repeat-containing taxis protein OE_2401F from Halobacterium salinarum (strain ATCC 29341 / DSM 671 / R1).